Consider the following 307-residue polypeptide: Sporulation sigma-E factor-processing peptidase (307 aa).

The next 5 membrane-spanning stretches (helical) occupy residues 7–27 (LIWMLNFGLDTILLMLCAVVL), 36–56 (LLLGGFIGSLIVLLMFTPFSH), 57–77 (LMVHPAIKILFSFFMVLMTFG), 89–109 (LTFYFATFVVGGGLMGVHFLF), and 127–147 (FGDPISWIFVLIGFPLLSYFS). Residue Asp-183 is part of the active site.

Belongs to the peptidase U4 family. In terms of assembly, self-associates. Interacts with SigE. Interacts with SpoIIR.

The protein localises to the cell membrane. Its function is as follows. Probable aspartic protease that is responsible for the proteolytic cleavage of the RNA polymerase sigma E factor (SigE/spoIIGB) to yield the active peptide in the mother cell during sporulation. Responds to a signal from the forespore that is triggered by the extracellular signal protein SpoIIR. The protein is Sporulation sigma-E factor-processing peptidase of Priestia megaterium (strain ATCC 12872 / QMB1551) (Bacillus megaterium).